The following is a 61-amino-acid chain: Small ribosomal subunit protein uS14 (61 aa).

Zn(2+) contacts are provided by C24, C27, C40, and C43.

Belongs to the universal ribosomal protein uS14 family. Zinc-binding uS14 subfamily. In terms of assembly, part of the 30S ribosomal subunit. Contacts proteins S3 and S10. Requires Zn(2+) as cofactor.

In terms of biological role, binds 16S rRNA, required for the assembly of 30S particles and may also be responsible for determining the conformation of the 16S rRNA at the A site. The chain is Small ribosomal subunit protein uS14 from Heliobacterium modesticaldum (strain ATCC 51547 / Ice1).